Consider the following 250-residue polypeptide: Bacteriorhodopsin-I (250 aa).

7 helical membrane passes run 7-27 (EGIW…YFIA), 42-62 (IATI…ALGF), 81-101 (YTDW…LAGA), 114-134 (VLMI…VLSA), 139-159 (LVWW…LFSS), 185-205 (VWLV…LVGI), and 207-227 (IETA…GIIL). Lys-220 carries the post-translational modification N6-(retinylidene)lysine.

The protein belongs to the archaeal/bacterial/fungal opsin family. In terms of processing, the covalent binding of retinal to the apoprotein, bacterioopsin, generates bacteriorhodopsin.

Its subcellular location is the membrane. Its function is as follows. Light-driven proton pump. In Haloarcula marismortui (strain ATCC 43049 / DSM 3752 / JCM 8966 / VKM B-1809) (Halobacterium marismortui), this protein is Bacteriorhodopsin-I (bop).